Consider the following 357-residue polypeptide: Ribosomal RNA large subunit methyltransferase M (357 aa).

Residues Ser-183, 216–219 (APGG), Asp-235, Asp-255, and Asp-271 each bind S-adenosyl-L-methionine. Lys-300 acts as the Proton acceptor in catalysis.

The protein belongs to the class I-like SAM-binding methyltransferase superfamily. RNA methyltransferase RlmE family. RlmM subfamily. Monomer.

Its subcellular location is the cytoplasm. The enzyme catalyses cytidine(2498) in 23S rRNA + S-adenosyl-L-methionine = 2'-O-methylcytidine(2498) in 23S rRNA + S-adenosyl-L-homocysteine + H(+). Catalyzes the 2'-O-methylation at nucleotide C2498 in 23S rRNA. This is Ribosomal RNA large subunit methyltransferase M from Pseudomonas fluorescens (strain Pf0-1).